Here is a 634-residue protein sequence, read N- to C-terminus: Probable potassium transport system protein Kup (634 aa).

The next 12 membrane-spanning stretches (helical) occupy residues Ile21–Leu41, Ile61–Ile81, Ile110–Ile130, Pro148–Cys168, Phe180–Ala200, Phe217–Thr237, Trp258–Leu278, Gly296–Ile316, Ile348–Phe368, Ala377–Ala397, Leu408–Ile428, and Asp432–Leu452.

Belongs to the HAK/KUP transporter (TC 2.A.72) family.

Its subcellular location is the cell inner membrane. The enzyme catalyses K(+)(in) + H(+)(in) = K(+)(out) + H(+)(out). Transport of potassium into the cell. Likely operates as a K(+):H(+) symporter. This Xylella fastidiosa (strain 9a5c) protein is Probable potassium transport system protein Kup.